A 623-amino-acid chain; its full sequence is NADPH-dependent diflavin oxidoreductase 1 (623 aa).

Residues 7-168 (IVILYGSETG…VYFEYEKKVL (162 aa)) form the Flavodoxin-like domain. FMN contacts are provided by residues 13 to 18 (SETGNA), 60 to 63 (STTG), 106 to 115 (LGDSSYPKFN), and Asp-142. Positions 224–491 (ESLKVGRVNI…VGPGVGLAPL (268 aa)) constitute an FAD-binding FR-type domain. FAD contacts are provided by residues Arg-383, 413–416 (RYYS), and 445–448 (GICT). 538 to 539 (SR) provides a ligand contact to NADP(+). Residue Trp-623 participates in FAD binding.

It belongs to the NADPH-dependent diflavin oxidoreductase NDOR1 family. This sequence in the N-terminal section; belongs to the flavodoxin family. In the C-terminal section; belongs to the flavoprotein pyridine nucleotide cytochrome reductase family. Interacts with DRE2; as part of the cytosolic iron-sulfur (Fe-S) protein assembly (CIA) machinery. FAD serves as cofactor. The cofactor is FMN.

The protein resides in the cytoplasm. It is found in the mitochondrion. The enzyme catalyses 2 oxidized [2Fe-2S]-[protein] + NADPH = 2 reduced [2Fe-2S]-[protein] + NADP(+) + H(+). Its function is as follows. NADPH-dependent reductase which is a central component of the cytosolic iron-sulfur (Fe-S) protein assembly (CIA) machinery. Transfers electrons from NADPH via its FAD and FMN prosthetic groups to the [2Fe-2S] cluster of DRE2, another key component of the CIA machinery. In turn, this reduced cluster provides electrons for assembly of cytosolic iron-sulfur cluster proteins. Positively controls H(2)O(2)-induced cell death. The polypeptide is NADPH-dependent diflavin oxidoreductase 1 (Saccharomyces cerevisiae (strain ATCC 204508 / S288c) (Baker's yeast)).